The following is a 262-amino-acid chain: Phosphatidylglycerol--prolipoprotein diacylglyceryl transferase (262 aa).

The next 4 helical transmembrane spans lie at 9-29 (LGPL…ILAV), 41-61 (IIPD…ILGA), 80-100 (IFAI…GALV), and 109-129 (LINT…AQSL). Arginine 131 provides a ligand contact to a 1,2-diacyl-sn-glycero-3-phospho-(1'-sn-glycerol). The next 3 membrane-spanning stretches (helical) occupy residues 167 to 187 (QPTF…ILIF), 197 to 217 (GHIT…IEGM), and 226 to 246 (GLRV…MIVI).

The protein belongs to the Lgt family.

Its subcellular location is the cell membrane. It carries out the reaction L-cysteinyl-[prolipoprotein] + a 1,2-diacyl-sn-glycero-3-phospho-(1'-sn-glycerol) = an S-1,2-diacyl-sn-glyceryl-L-cysteinyl-[prolipoprotein] + sn-glycerol 1-phosphate + H(+). Its pathway is protein modification; lipoprotein biosynthesis (diacylglyceryl transfer). Functionally, catalyzes the transfer of the diacylglyceryl group from phosphatidylglycerol to the sulfhydryl group of the N-terminal cysteine of a prolipoprotein, the first step in the formation of mature lipoproteins. In Streptococcus pneumoniae (strain ATCC 700669 / Spain 23F-1), this protein is Phosphatidylglycerol--prolipoprotein diacylglyceryl transferase.